Here is a 299-residue protein sequence, read N- to C-terminus: Acetaldehyde dehydrogenase (299 aa).

NAD(+) is bound at residue 11 to 14 (SGNI). The active-site Acyl-thioester intermediate is C126. Residues 157–165 (SAGPGTRAN) and N267 contribute to the NAD(+) site.

The protein belongs to the acetaldehyde dehydrogenase family.

It catalyses the reaction acetaldehyde + NAD(+) + CoA = acetyl-CoA + NADH + H(+). The sequence is that of Acetaldehyde dehydrogenase from Bacillus cereus (strain ATCC 10987 / NRS 248).